We begin with the raw amino-acid sequence, 421 residues long: MRAKGTRKNYQHLWRWGTMLLGMLMICSAAEQLWVTVYYGVPVWKEATTTLFCASDAKAYDTEVHNVWATHACVPTDPNPQEVVLQNVTENFNMWKNNTVEQMHEDIISLWDQSLKPCVKSTPLCVTLNCTDLTNATYANGSSEERGEIRNCSFNVTTIIRNKIQKEYALFYRLDIVPIDKDNTSYTLINCNTSVITQACPKVSFEPIPIHYCAPAGFAILKCNDKKFNGTGPCTNVSTVQCTHGIKPVVSTQLLLNGSLAEGEVVIRSENFTNNAKTIIVQLNKSVEINCTRPNNNTKKGIAIGPGRTLYAREKIIGDIRQAHCNISKAKWNDTLKQIVTKLKEQFRNKTIVFNQSSGGDPEIVMHSFNCGGEFFYCKTTQLFNSTWLFNSTWNDTERSDNNETIIIPCRIKQIINSGRK.

The N-terminal stretch at 1-31 (MRAKGTRKNYQHLWRWGTMLLGMLMICSAAE) is a signal peptide. Residues Cys-53 and Cys-73 are joined by a disulfide bond. Residues Asn-87, Asn-97, Asn-129, Asn-135, Asn-140, Asn-151, Asn-155, Asn-183, Asn-192, Asn-229, Asn-236, Asn-257, Asn-271, Asn-284, Asn-290, Asn-296, Asn-326, Asn-333, Asn-349, and Asn-355 are each glycosylated (N-linked (GlcNAc...) asparagine; by host). Intrachain disulfides connect Cys-118–Cys-200, Cys-125–Cys-191, Cys-130–Cys-152, Cys-213–Cys-242, and Cys-223–Cys-234. Positions 130-151 (CTDLTNATYANGSSEERGEIRN) are V1. Positions 152–191 (CSFNVTTIIRNKIQKEYALFYRLDIVPIDKDNTSYTLINC) are V2. Residues 291–324 (CTRPNNNTKKGIAIGPGRTLYAREKIIGDIRQAH) are V3. A disulfide bond links Cys-291 and Cys-325. The CD4-binding loop stretch occupies residues 357 to 367 (SSGGDPEIVMH). Cys-378 and Cys-410 are joined by a disulfide. Positions 378–410 (CKTTQLFNSTWLFNSTWNDTERSDNNETIIIPC) are V4. N-linked (GlcNAc...) asparagine; by host glycans are attached at residues Asn-385, Asn-391, Asn-395, and Asn-403.

Its subcellular location is the virion membrane. The sequence is that of Truncated surface protein (env) from Human immunodeficiency virus type 1 group M subtype B (isolate NY5) (HIV-1).